The following is a 538-amino-acid chain: Chaperonin GroEL (538 aa).

ATP is bound by residues T29–P32, D86–T90, G413, N476–A478, and D492.

Belongs to the chaperonin (HSP60) family. In terms of assembly, forms a cylinder of 14 subunits composed of two heptameric rings stacked back-to-back. Interacts with the co-chaperonin GroES.

The protein resides in the cytoplasm. It catalyses the reaction ATP + H2O + a folded polypeptide = ADP + phosphate + an unfolded polypeptide.. Together with its co-chaperonin GroES, plays an essential role in assisting protein folding. The GroEL-GroES system forms a nano-cage that allows encapsulation of the non-native substrate proteins and provides a physical environment optimized to promote and accelerate protein folding. In Staphylococcus aureus (strain Mu3 / ATCC 700698), this protein is Chaperonin GroEL.